Reading from the N-terminus, the 343-residue chain is Plasminogen (343 aa).

2 Kringle domains span residues 1-17 (APQAPSVENPPEADCML) and 41-120 (AQEP…GCVA). A plasmin heavy chain A region spans residues 1–140 (APQAPSVENP…LRRRSREHFC (140 aa)). 3 cysteine pairs are disulfide-bonded: cysteine 15–cysteine 94, cysteine 36–cysteine 77, and cysteine 65–cysteine 89. Residues 114 to 341 (VVGGCVATPH…YVPWIEETMR (228 aa)) enclose the Peptidase S1 domain. Serine 130 is modified (phosphoserine). Cysteine 140 and cysteine 156 are oxidised to a cystine. A plasmin light chain B region spans residues 141-343 (GGTLISPEWV…PWIEETMRRY (203 aa)). Residues histidine 155 and aspartate 198 each act as charge relay system in the active site. Serine 221 bears the Phosphoserine mark. Cystine bridges form between cysteine 232–cysteine 299, cysteine 262–cysteine 278, and cysteine 289–cysteine 317. Serine 293 functions as the Charge relay system in the catalytic mechanism.

Belongs to the peptidase S1 family. Plasminogen subfamily. In terms of assembly, interacts with CSPG4 and AMOT. Interacts (via the Kringle domains) with HRG; the interaction tethers PLG to the cell surface and enhances its activation. Interacts (via Kringle 4 domain) with ADA; the interaction stimulates PLG activation when in complex with DPP4. Angiostatin: Interacts with ATP5F1A; the interaction inhibits most of the angiogenic effects of angiostatin.

Its subcellular location is the secreted. It carries out the reaction Preferential cleavage: Lys-|-Xaa &gt; Arg-|-Xaa, higher selectivity than trypsin. Converts fibrin into soluble products.. Converted into plasmin by plasminogen activators, both plasminogen and its activator being bound to fibrin. Cannot be activated with streptokinase. In terms of biological role, plasmin dissolves the fibrin of blood clots and acts as a proteolytic factor in a variety of other processes including embryonic development, tissue remodeling, tumor invasion, and inflammation. In ovulation, weakens the walls of the Graafian follicle. It activates the urokinase-type plasminogen activator, collagenases and several complement zymogens, such as C1, C4 and C5. Cleavage of fibronectin and laminin leads to cell detachment and apoptosis. Also cleaves fibrin, thrombospondin and von Willebrand factor. Its role in tissue remodeling and tumor invasion may be modulated by CSPG4. Binds to cells. This Ovis aries (Sheep) protein is Plasminogen (PLG).